The following is a 311-amino-acid chain: Pyrimidine-specific ribonucleoside hydrolase RihA (311 aa).

Residue H240 is part of the active site.

This sequence belongs to the IUNH family. RihA subfamily.

Functionally, hydrolyzes with equal efficiency cytidine or uridine to ribose and cytosine or uracil, respectively. This is Pyrimidine-specific ribonucleoside hydrolase RihA from Escherichia coli O157:H7.